The following is a 395-amino-acid chain: Flap endonuclease 1 (395 aa).

The N-domain stretch occupies residues Met-1–Lys-104. Residue Asp-34 coordinates Mg(2+). DNA is bound by residues Arg-47 and Arg-70. Asp-86 is a binding site for Mg(2+). The disordered stretch occupies residues Ala-102–Glu-121. The tract at residues Asp-122–His-253 is I-domain. Mg(2+) contacts are provided by Glu-158, Glu-160, Asp-179, and Asp-181. Residue Glu-158 coordinates DNA. The DNA site is built by Gly-231 and Asp-233. Asp-233 lines the Mg(2+) pocket. The tract at residues Gln-341 to Phe-349 is interaction with PCNA. The disordered stretch occupies residues Phe-348–Ala-395. Positions Ala-353–Ala-389 are enriched in basic and acidic residues.

Belongs to the XPG/RAD2 endonuclease family. FEN1 subfamily. In terms of assembly, interacts with PCNA. Three molecules of fen1 bind to one PCNA trimer with each molecule binding to one PCNA monomer. PCNA stimulates the nuclease activity without altering cleavage specificity. Requires Mg(2+) as cofactor. In terms of processing, phosphorylated. Phosphorylation upon DNA damage induces relocalization to the nuclear plasma.

It localises to the nucleus. The protein resides in the nucleolus. It is found in the nucleoplasm. The protein localises to the mitochondrion. Functionally, structure-specific nuclease with 5'-flap endonuclease and 5'-3' exonuclease activities involved in DNA replication and repair. During DNA replication, cleaves the 5'-overhanging flap structure that is generated by displacement synthesis when DNA polymerase encounters the 5'-end of a downstream Okazaki fragment. It enters the flap from the 5'-end and then tracks to cleave the flap base, leaving a nick for ligation. Also involved in the long patch base excision repair (LP-BER) pathway, by cleaving within the apurinic/apyrimidinic (AP) site-terminated flap. Acts as a genome stabilization factor that prevents flaps from equilibrating into structures that lead to duplications and deletions. Also possesses 5'-3' exonuclease activity on nicked or gapped double-stranded DNA, and exhibits RNase H activity. Also involved in replication and repair of rDNA and in repairing mitochondrial DNA. The chain is Flap endonuclease 1 (fen1) from Neosartorya fischeri (strain ATCC 1020 / DSM 3700 / CBS 544.65 / FGSC A1164 / JCM 1740 / NRRL 181 / WB 181) (Aspergillus fischerianus).